The sequence spans 919 residues: Transcriptional regulatory protein EDS1 (919 aa).

A disordered region spans residues 1-54; sequence MSHHVPNLYGTPIRDPHERKRNSASMGEVNQSVSSRNCERGSEKGTKQRKKASH. Over residues 23 to 36 the composition is skewed to polar residues; it reads SASMGEVNQSVSSR. Basic and acidic residues predominate over residues 37–46; that stretch reads NCERGSEKGT. The zn(2)-C6 fungal-type DNA-binding region spans 56-85; sequence CDQCRRKRIKCRFDKHTGVCQGCLEVGEKC. The interval 297–338 is disordered; the sequence is AGFPNKKLGTDGRSDKWDKNSTWKPVYRSSNPSHPSTEKNVS. Positions 304-317 are enriched in basic and acidic residues; sequence LGTDGRSDKWDKNS. The span at 318-338 shows a compositional bias: polar residues; that stretch reads TWKPVYRSSNPSHPSTEKNVS.

The protein belongs to the EDS1/RGT1 family. In terms of assembly, binds DNA in a sequence-specific manner.

It localises to the nucleus. This chain is Transcriptional regulatory protein EDS1 (EDS1), found in Saccharomyces cerevisiae (strain ATCC 204508 / S288c) (Baker's yeast).